A 252-amino-acid polypeptide reads, in one-letter code: Phosphoglycolate phosphatase (252 aa).

The active-site Nucleophile is the Asp13. 3 residues coordinate Mg(2+): Asp13, Asp15, and Asp192.

This sequence belongs to the HAD-like hydrolase superfamily. CbbY/CbbZ/Gph/YieH family. Monomer. Mg(2+) serves as cofactor. The cofactor is chloride.

It catalyses the reaction 2-phosphoglycolate + H2O = glycolate + phosphate. The protein operates within organic acid metabolism; glycolate biosynthesis; glycolate from 2-phosphoglycolate: step 1/1. Its function is as follows. Specifically catalyzes the dephosphorylation of 2-phosphoglycolate. Is involved in the dissimilation of the intracellular 2-phosphoglycolate formed during the DNA repair of 3'-phosphoglycolate ends, a major class of DNA lesions induced by oxidative stress. This chain is Phosphoglycolate phosphatase, found in Salmonella paratyphi A (strain ATCC 9150 / SARB42).